The primary structure comprises 569 residues: Formate--tetrahydrofolate ligase (569 aa).

Thr-68–Thr-75 serves as a coordination point for ATP.

The protein belongs to the formate--tetrahydrofolate ligase family.

The catalysed reaction is (6S)-5,6,7,8-tetrahydrofolate + formate + ATP = (6R)-10-formyltetrahydrofolate + ADP + phosphate. It functions in the pathway one-carbon metabolism; tetrahydrofolate interconversion. The chain is Formate--tetrahydrofolate ligase from Psychrobacter sp. (strain PRwf-1).